Here is a 259-residue protein sequence, read N- to C-terminus: Global transcriptional regulator CodY (259 aa).

Positions 1–155 (MDLLSRARKI…GATVVGMEIL (155 aa)) are GAF domain. Residues 203–222 (ASKIADRVGITRSVIVNALR) constitute a DNA-binding region (H-T-H motif). Ser215 carries the phosphoserine modification.

It belongs to the CodY family.

Its subcellular location is the cytoplasm. Its function is as follows. DNA-binding global transcriptional regulator which is involved in the adaptive response to starvation and acts by directly or indirectly controlling the expression of numerous genes in response to nutrient availability. During rapid exponential growth, CodY is highly active and represses genes whose products allow adaptation to nutrient depletion. This chain is Global transcriptional regulator CodY, found in Oceanobacillus iheyensis (strain DSM 14371 / CIP 107618 / JCM 11309 / KCTC 3954 / HTE831).